A 178-amino-acid chain; its full sequence is Histone H3-like centromeric protein CENH3 (178 aa).

Positions Met1–Arg81 are disordered. Position 5 is an N6,N6,N6-trimethyllysine; alternate (Lys5). An N6,N6-dimethyllysine; alternate modification is found at Lys5. Lys5 is subject to N6-methyllysine; alternate. Ser11 bears the Phosphoserine mark. Over residues Gln16–Arg36 the composition is skewed to low complexity. A compositionally biased stretch (polar residues) spans Asp43–Thr56. Residues Lys63 and Lys75 each carry the N6-methyllysine; alternate modification. N6-acetyllysine; alternate is present on Lys63. The residue at position 75 (Lys75) is an N6,N6,N6-trimethyllysine; alternate. Lys75 carries the post-translational modification N6,N6-dimethyllysine; alternate.

It belongs to the histone H3 family. In terms of assembly, forms a nucleosome-like histone octamer containing two molecules each of H2A, H2B, CENH3 and H4 assembled in one CENH3-H4 heterotetramer and two H2A-H2B heterodimers. Interacts with ORTH2.

It is found in the chromosome. Its subcellular location is the centromere. It localises to the kinetochore. In terms of biological role, histone H3-like variant which exclusively replaces conventional H3 in the nucleosome core of centromeric chromatin at the inner plate of the kinetochore. Required for recruitment and assembly of kinetochore proteins, mitotic progression and chromosome segregation. May serve as an epigenetic mark that propagates centromere identity through replication and cell division. The polypeptide is Histone H3-like centromeric protein CENH3 (Arabidopsis thaliana (Mouse-ear cress)).